A 231-amino-acid polypeptide reads, in one-letter code: DNA repair protein RecO (231 aa).

This sequence belongs to the RecO family.

In terms of biological role, involved in DNA repair and RecF pathway recombination. This Coxiella burnetii (strain CbuK_Q154) (Coxiella burnetii (strain Q154)) protein is DNA repair protein RecO.